Reading from the N-terminus, the 262-residue chain is Acetaldehyde dehydrogenase 7 (262 aa).

10 to 13 (SGNI) contributes to the NAD(+) binding site. C128 acts as the Acyl-thioester intermediate in catalysis. 159–167 (SAGPGTRAN) lines the NAD(+) pocket.

Belongs to the acetaldehyde dehydrogenase family.

It carries out the reaction acetaldehyde + NAD(+) + CoA = acetyl-CoA + NADH + H(+). The polypeptide is Acetaldehyde dehydrogenase 7 (Rhodococcus jostii (strain RHA1)).